The following is a 161-amino-acid chain: Stress response protein YvgO (161 aa).

The signal sequence occupies residues 1–26; sequence MKRIRIPMTLALGAALTIAPLSFASA.

This chain is Stress response protein YvgO (yvgO), found in Bacillus subtilis (strain 168).